A 179-amino-acid chain; its full sequence is UPF0302 protein EF_1554 (179 aa).

It belongs to the UPF0302 family.

The protein is UPF0302 protein EF_1554 of Enterococcus faecalis (strain ATCC 700802 / V583).